The sequence spans 205 residues: Small ribosomal subunit protein uS4 (205 aa).

Residues 95–156 form the S4 RNA-binding domain; that stretch reads SRLDNIVYRM…KTIKIPIVKA (62 aa).

The protein belongs to the universal ribosomal protein uS4 family. As to quaternary structure, part of the 30S ribosomal subunit. Contacts protein S5. The interaction surface between S4 and S5 is involved in control of translational fidelity.

Its function is as follows. One of the primary rRNA binding proteins, it binds directly to 16S rRNA where it nucleates assembly of the body of the 30S subunit. Functionally, with S5 and S12 plays an important role in translational accuracy. This chain is Small ribosomal subunit protein uS4, found in Mycoplasma pneumoniae (strain ATCC 29342 / M129 / Subtype 1) (Mycoplasmoides pneumoniae).